The primary structure comprises 846 residues: Translation initiation factor IF-2 (846 aa).

Residues 199–219 are disordered; it reads KREEEEKKSKAKKAGGKGFKK. Basic residues predominate over residues 207–219; that stretch reads SKAKKAGGKGFKK. Residues 345 to 512 enclose the tr-type G domain; the sequence is SRAPVVTIMG…AVLLQSEVLE (168 aa). Residues 354–361 are G1; that stretch reads GHVDHGKT. A GTP-binding site is contributed by 354 to 361; the sequence is GHVDHGKT. The segment at 379–383 is G2; sequence GITQH. Positions 400-403 are G3; that stretch reads DTPG. GTP contacts are provided by residues 400–404 and 454–457; these read DTPGH and NKID. The interval 454-457 is G4; the sequence is NKID. The G5 stretch occupies residues 490–492; the sequence is SAK.

The protein belongs to the TRAFAC class translation factor GTPase superfamily. Classic translation factor GTPase family. IF-2 subfamily.

The protein resides in the cytoplasm. Functionally, one of the essential components for the initiation of protein synthesis. Protects formylmethionyl-tRNA from spontaneous hydrolysis and promotes its binding to the 30S ribosomal subunits. Also involved in the hydrolysis of GTP during the formation of the 70S ribosomal complex. This Francisella tularensis subsp. holarctica (strain LVS) protein is Translation initiation factor IF-2.